We begin with the raw amino-acid sequence, 442 residues long: Trigger factor (442 aa).

The PPIase FKBP-type domain maps to 163-248 (YDRVTINYCI…IIKIEKKQEL (86 aa)).

Belongs to the FKBP-type PPIase family. Tig subfamily.

The protein localises to the cytoplasm. The catalysed reaction is [protein]-peptidylproline (omega=180) = [protein]-peptidylproline (omega=0). Its function is as follows. Involved in protein export. Acts as a chaperone by maintaining the newly synthesized protein in an open conformation. Functions as a peptidyl-prolyl cis-trans isomerase. This Buchnera aphidicola subsp. Acyrthosiphon pisum (strain Tuc7) protein is Trigger factor.